Reading from the N-terminus, the 145-residue chain is Small ribosomal subunit protein eS19 (145 aa).

The disordered stretch occupies residues 120-145; it reads GGRRISENGQRDLDRIAAQTLEEDDE. The segment covering 123-134 has biased composition (basic and acidic residues); the sequence is RISENGQRDLDR.

It belongs to the eukaryotic ribosomal protein eS19 family. Component of the small ribosomal subunit. Mature ribosomes consist of a small (40S) and a large (60S) subunit. The 40S subunit contains about 32 different proteins and 1 molecule of RNA (18S). The 60S subunit contains 45 different proteins and 3 molecules of RNA (25S, 5.8S and 5S).

Its subcellular location is the cytoplasm. Functionally, component of the ribosome, a large ribonucleoprotein complex responsible for the synthesis of proteins in the cell. The small ribosomal subunit (SSU) binds messenger RNAs (mRNAs) and translates the encoded message by selecting cognate aminoacyl-transfer RNA (tRNA) molecules. The large subunit (LSU) contains the ribosomal catalytic site termed the peptidyl transferase center (PTC), which catalyzes the formation of peptide bonds, thereby polymerizing the amino acids delivered by tRNAs into a polypeptide chain. The nascent polypeptides leave the ribosome through a tunnel in the LSU and interact with protein factors that function in enzymatic processing, targeting, and the membrane insertion of nascent chains at the exit of the ribosomal tunnel. RPS19A is required for proper maturation of the small (40S) ribosomal subunit. This chain is Small ribosomal subunit protein eS19 (RPS19A), found in Candida albicans (strain SC5314 / ATCC MYA-2876) (Yeast).